The sequence spans 106 residues: MGMNQQRLTQVILAPIVSEKSNVLAEKRNQMTFKVLANATKPEIKAAVELLFGVQVASVTTVTTKGKTKRFGRTLGRRSDVKKAYVSLAAGQELDLEAAAAAADKE.

Belongs to the universal ribosomal protein uL23 family. As to quaternary structure, part of the 50S ribosomal subunit. Contacts protein L29, and trigger factor when it is bound to the ribosome.

Its function is as follows. One of the early assembly proteins it binds 23S rRNA. One of the proteins that surrounds the polypeptide exit tunnel on the outside of the ribosome. Forms the main docking site for trigger factor binding to the ribosome. The protein is Large ribosomal subunit protein uL23 of Neisseria meningitidis serogroup A / serotype 4A (strain DSM 15465 / Z2491).